The chain runs to 267 residues: Syntaxin-72 (267 aa).

Over 1 to 244 (MPVIDIIFRV…QLVQMRSSRN (244 aa)) the chain is Cytoplasmic. Residues 53–87 (KAELASTEKNRAAAVAMNAEVRRTKARLAEDVVKL) adopt a coiled-coil conformation. The region spanning 173-235 (EMRRKKQDEG…KNTNVRLKKQ (63 aa)) is the t-SNARE coiled-coil homology domain. Residues 245–265 (FCIDIILLCVILGIVSYIYNA) traverse the membrane as a helical; Anchor for type IV membrane protein segment. Over 266–267 (LN) the chain is Vesicular.

Belongs to the syntaxin family. As to quaternary structure, part of the t-SNARE complex. As to expression, expressed in root, leaf, stem, flower and silique.

It localises to the membrane. Its function is as follows. Vesicle trafficking protein that functions in the secretory pathway. This chain is Syntaxin-72 (SYP72), found in Arabidopsis thaliana (Mouse-ear cress).